The sequence spans 501 residues: Aldehyde dehydrogenase 1A1 (501 aa).

At serine 2 the chain carries N-acetylserine. An N6-acetyllysine mark is found at lysine 91 and lysine 128. Residues 167–170 (IPWN), 193–196 (KPAE), 226–227 (GP), and 246–247 (GS) each bind NAD(+). Lysine 252 is subject to N6-acetyllysine. Glutamate 269 serves as the catalytic Proton acceptor. 269–271 (ELG) serves as a coordination point for NAD(+). Cysteine 303 functions as the Nucleophile in the catalytic mechanism. Residues 336-501 (LTPGINQGPQ…VAMKISQKNS (166 aa)) are mediates interaction with PRMT3. Residue threonine 337 is modified to Phosphothreonine. 349 to 353 (EQHDK) lines the NAD(+) pocket. N6-acetyllysine is present on residues lysine 353 and lysine 367. 400–402 (EIF) is an NAD(+) binding site. An N6-acetyllysine modification is found at lysine 410. Serine 413 is modified (phosphoserine). 3 positions are modified to N6-acetyllysine: lysine 419, lysine 435, and lysine 495.

It belongs to the aldehyde dehydrogenase family. As to quaternary structure, homotetramer. Interacts with PRMT3; the interaction is direct, inhibits ALDH1A1 aldehyde dehydrogenase activity and is independent of the methyltransferase activity of PRMT3. The N-terminus is blocked most probably by acetylation. In terms of tissue distribution, expressed in retina. Expressed in lens and cornea (at protein level). Expressed by midbrain dopamine neurons.

The protein localises to the cytoplasm. It is found in the cytosol. Its subcellular location is the cell projection. The protein resides in the axon. It catalyses the reaction an aldehyde + NAD(+) + H2O = a carboxylate + NADH + 2 H(+). The enzyme catalyses all-trans-retinal + NAD(+) + H2O = all-trans-retinoate + NADH + 2 H(+). The catalysed reaction is 9-cis-retinal + NAD(+) + H2O = 9-cis-retinoate + NADH + 2 H(+). It carries out the reaction 11-cis-retinal + NAD(+) + H2O = 11-cis-retinoate + NADH + 2 H(+). It catalyses the reaction 13-cis-retinal + NAD(+) + H2O = 13-cis-retinoate + NADH + 2 H(+). The enzyme catalyses 4-aminobutanal + NAD(+) + H2O = 4-aminobutanoate + NADH + 2 H(+). The catalysed reaction is 3-deoxyglucosone + NAD(+) + H2O = 2-dehydro-3-deoxy-D-gluconate + NADH + 2 H(+). It carries out the reaction (E)-4-hydroxynon-2-enal + NAD(+) + H2O = (E)-4-hydroxynon-2-enoate + NADH + 2 H(+). It catalyses the reaction malonaldehyde + NAD(+) + H2O = 3-oxopropanoate + NADH + 2 H(+). The enzyme catalyses hexanal + NAD(+) + H2O = hexanoate + NADH + 2 H(+). The catalysed reaction is propanal + NAD(+) + H2O = propanoate + NADH + 2 H(+). It carries out the reaction acetaldehyde + NAD(+) + H2O = acetate + NADH + 2 H(+). It catalyses the reaction benzaldehyde + NAD(+) + H2O = benzoate + NADH + 2 H(+). It participates in cofactor metabolism; retinol metabolism. Its activity is regulated as follows. The aminobutyraldehyde dehydrogenase activity is negatively regulated by ethanol in vivo. Its function is as follows. Cytosolic dehydrogenase that catalyzes the irreversible oxidation of a wide range of aldehydes to their corresponding carboxylic acid. Functions downstream of retinol dehydrogenases and catalyzes the oxidation of retinaldehyde into retinoic acid, the second step in the oxidation of retinol/vitamin A into retinoic acid. This pathway is crucial to control the levels of retinol and retinoic acid, two important molecules which excess can be teratogenic and cytotoxic. Also oxidizes aldehydes resulting from lipid peroxidation like (E)-4-hydroxynon-2-enal/HNE, malonaldehyde and hexanal that form protein adducts and are highly cytotoxic. By participating for instance to the clearance of (E)-4-hydroxynon-2-enal/HNE in the lens epithelium prevents the formation of HNE-protein adducts and lens opacification. Also functions downstream of fructosamine-3-kinase in the fructosamine degradation pathway by catalyzing the oxidation of 3-deoxyglucosone, the carbohydrate product of fructosamine 3-phosphate decomposition, which is itself a potent glycating agent that may react with lysine and arginine side-chains of proteins. Also has an aminobutyraldehyde dehydrogenase activity and is probably part of an alternative pathway for the biosynthesis of GABA/4-aminobutanoate in midbrain, thereby playing a role in GABAergic synaptic transmission. In Mus musculus (Mouse), this protein is Aldehyde dehydrogenase 1A1.